A 203-amino-acid polypeptide reads, in one-letter code: MARSFSQLAINAEKQRTSLAVSKKPTDQPELEIHTLGNSALRQSAKRISKVDKNIRDLVKKMLHSMYAAKGIGLAAPQIGSQQQLLVIDLDIENSATPPIILINPEITEFSATIDTYEEGCLSIPGVYLDVIRPSSIKVNFRDEMGRPKKINADGLLARCIQHEMDHLNGVLFVDRAINEEALNKELKEHGFKKKDVLRLCSD.

Residues cysteine 121 and histidine 163 each coordinate Fe cation. Glutamate 164 is a catalytic residue. A Fe cation-binding site is contributed by histidine 167.

The protein belongs to the polypeptide deformylase family. The cofactor is Fe(2+).

The catalysed reaction is N-terminal N-formyl-L-methionyl-[peptide] + H2O = N-terminal L-methionyl-[peptide] + formate. In terms of biological role, removes the formyl group from the N-terminal Met of newly synthesized proteins. Requires at least a dipeptide for an efficient rate of reaction. N-terminal L-methionine is a prerequisite for activity but the enzyme has broad specificity at other positions. This is Peptide deformylase from Prochlorococcus marinus (strain SARG / CCMP1375 / SS120).